The following is a 363-amino-acid chain: Biotin synthase (363 aa).

The Radical SAM core domain maps to 38–266; the sequence is NTVQVSTLLS…ETQVRLSAGR (229 aa). [4Fe-4S] cluster-binding residues include Cys53, Cys57, and Cys60. Residues Cys97, Cys129, Cys189, and Arg261 each coordinate [2Fe-2S] cluster. Positions 315–363 are disordered; sequence KAFEKKSQPESVAAEKSKYQSQGEKPRWSRPEHKIDRNLEAQQNAKTKA. A compositionally biased stretch (basic and acidic residues) spans 316–353; sequence AFEKKSQPESVAAEKSKYQSQGEKPRWSRPEHKIDRNL. The span at 354-363 shows a compositional bias: polar residues; that stretch reads EAQQNAKTKA.

It belongs to the radical SAM superfamily. Biotin synthase family. Homodimer. The cofactor is [4Fe-4S] cluster. [2Fe-2S] cluster is required as a cofactor.

The catalysed reaction is (4R,5S)-dethiobiotin + (sulfur carrier)-SH + 2 reduced [2Fe-2S]-[ferredoxin] + 2 S-adenosyl-L-methionine = (sulfur carrier)-H + biotin + 2 5'-deoxyadenosine + 2 L-methionine + 2 oxidized [2Fe-2S]-[ferredoxin]. The protein operates within cofactor biosynthesis; biotin biosynthesis; biotin from 7,8-diaminononanoate: step 2/2. Catalyzes the conversion of dethiobiotin (DTB) to biotin by the insertion of a sulfur atom into dethiobiotin via a radical-based mechanism. The chain is Biotin synthase from Christiangramia forsetii (strain DSM 17595 / CGMCC 1.15422 / KT0803) (Gramella forsetii).